The primary structure comprises 406 residues: Argininosuccinate synthase (406 aa).

9–17 contacts ATP; it reads AYSGGLDTS. Y86 lines the L-citrulline pocket. Residue G116 coordinates ATP. 3 residues coordinate L-aspartate: T118, N122, and D123. N122 contacts L-citrulline. The L-citrulline site is built by R126, S174, S183, E259, and Y271.

Belongs to the argininosuccinate synthase family. Type 1 subfamily. Homotetramer.

The protein resides in the cytoplasm. It catalyses the reaction L-citrulline + L-aspartate + ATP = 2-(N(omega)-L-arginino)succinate + AMP + diphosphate + H(+). It functions in the pathway amino-acid biosynthesis; L-arginine biosynthesis; L-arginine from L-ornithine and carbamoyl phosphate: step 2/3. The sequence is that of Argininosuccinate synthase from Geobacillus thermodenitrificans (strain NG80-2).